The sequence spans 294 residues: Putative isocitrate dehydrogenase [NAD] subunit-like 4 (294 aa).

Belongs to the isocitrate and isopropylmalate dehydrogenases family.

Its function is as follows. Performs an essential role in the oxidative function of the citric acid cycle. The protein is Putative isocitrate dehydrogenase [NAD] subunit-like 4 (IDH4) of Arabidopsis thaliana (Mouse-ear cress).